Consider the following 427-residue polypeptide: Glutamate-1-semialdehyde 2,1-aminomutase (427 aa).

Residue lysine 265 is modified to N6-(pyridoxal phosphate)lysine.

The protein belongs to the class-III pyridoxal-phosphate-dependent aminotransferase family. HemL subfamily. As to quaternary structure, homodimer. Pyridoxal 5'-phosphate serves as cofactor.

The protein resides in the cytoplasm. The catalysed reaction is (S)-4-amino-5-oxopentanoate = 5-aminolevulinate. Its pathway is porphyrin-containing compound metabolism; protoporphyrin-IX biosynthesis; 5-aminolevulinate from L-glutamyl-tRNA(Glu): step 2/2. The chain is Glutamate-1-semialdehyde 2,1-aminomutase from Pseudomonas fluorescens (strain SBW25).